The following is a 782-amino-acid chain: Isoamylase 3, chloroplastic (782 aa).

The transit peptide at 1 to 68 (MDSIGINRAP…EKVRRFDSVR (68 aa)) directs the protein to the chloroplast. The span at 68–81 (RSTTARAQNGNAGR) shows a compositional bias: polar residues. The interval 68–88 (RSTTARAQNGNAGRSMTEERG) is disordered. Asp-445 (nucleophile) is an active-site residue. Glu-482 functions as the Proton donor in the catalytic mechanism.

It belongs to the glycosyl hydrolase 13 family. In terms of tissue distribution, expressed in leaves. Expressed at low levels in developing endosperm.

It is found in the plastid. The protein resides in the chloroplast. It localises to the amyloplast. The catalysed reaction is Hydrolysis of (1-&gt;6)-alpha-D-glucosidic branch linkages in glycogen, amylopectin and their beta-limit dextrins.. Its function is as follows. Starch-debranching enzyme that plays a role in the degradation of transitory starch during the night in leaf blades, facilitates the formation of spherical amyloplasts containing compound granules in the endosperm, and affects morphological characteristics of plastids. In Oryza sativa subsp. japonica (Rice), this protein is Isoamylase 3, chloroplastic.